The chain runs to 477 residues: Ribulose bisphosphate carboxylase large chain (477 aa).

A propeptide spanning residues 1-2 (MS) is cleaved from the precursor. Residue P3 is modified to N-acetylproline. Residue K14 is modified to N6,N6,N6-trimethyllysine. Residues N123 and T173 each contribute to the substrate site. Catalysis depends on K175, which acts as the Proton acceptor. K177 is a substrate binding site. K201, D203, and E204 together coordinate Mg(2+). Residue K201 is modified to N6-carboxylysine. Residue H294 is the Proton acceptor of the active site. Substrate contacts are provided by R295, H327, and S379.

This sequence belongs to the RuBisCO large chain family. Type I subfamily. As to quaternary structure, heterohexadecamer of 8 large chains and 8 small chains; disulfide-linked. The disulfide link is formed within the large subunit homodimers. Mg(2+) is required as a cofactor. Post-translationally, the disulfide bond which can form in the large chain dimeric partners within the hexadecamer appears to be associated with oxidative stress and protein turnover.

The protein resides in the plastid. The protein localises to the chloroplast. It catalyses the reaction 2 (2R)-3-phosphoglycerate + 2 H(+) = D-ribulose 1,5-bisphosphate + CO2 + H2O. The catalysed reaction is D-ribulose 1,5-bisphosphate + O2 = 2-phosphoglycolate + (2R)-3-phosphoglycerate + 2 H(+). Its function is as follows. RuBisCO catalyzes two reactions: the carboxylation of D-ribulose 1,5-bisphosphate, the primary event in carbon dioxide fixation, as well as the oxidative fragmentation of the pentose substrate in the photorespiration process. Both reactions occur simultaneously and in competition at the same active site. This is Ribulose bisphosphate carboxylase large chain from Digitalis purpurea (Common foxglove).